Reading from the N-terminus, the 488-residue chain is IQ domain-containing protein IQM1 (488 aa).

Positions 20-46 (RTNSFKRDDTNRHQNSPKSTMERSLSF) are disordered. Positions 32 to 46 (HQNSPKSTMERSLSF) are enriched in polar residues. An IQ domain is found at 106-135 (LDAAATTLQKVYKSYRTRRNLADCAVVVEE). Disordered stretches follow at residues 377–403 (SFKS…EKEE) and 448–472 (SPRV…VRVS). Over residues 388–403 (RKEVSEEVEIPSEKEE) the composition is skewed to basic and acidic residues.

As to quaternary structure, interacts (via IQ domain) with CAM5. As to expression, highly expressed in leaf mesophyll cells. Expressed in roots, rosette and cauline leaves, stems, flowers and siliques.

It is found in the cytoplasm. The protein localises to the nucleus. Involved in the modulation of stomatal movement. Promotes stomatal opening. May play a role in the regulation of chitin signaling. May be involved in biotic and abiotic stress responses. In Arabidopsis thaliana (Mouse-ear cress), this protein is IQ domain-containing protein IQM1.